A 352-amino-acid polypeptide reads, in one-letter code: B1 bradykinin receptor (352 aa).

Residues 1–41 (MASWPPLELQSSNQSQLFPQNATACDNAPEAWDLLHRVLPT) are Extracellular-facing. Asn-13 and Asn-21 each carry an N-linked (GlcNAc...) asparagine glycan. Residues 42-62 (FIISICSFGLLGNLFVLLVFL) traverse the membrane as a helical segment. Topologically, residues 63–72 (LPRRRLNVAE) are cytoplasmic. The chain crosses the membrane as a helical span at residues 73–93 (IYLANLAASDLVFVLGLPFWA). Residues 94–110 (ENIWNQFNWPFGALLCR) are Extracellular-facing. An intrachain disulfide couples Cys-109 to Cys-188. A helical transmembrane segment spans residues 111–131 (GINGVIKANLFISIFLVVAIS). Over 132-153 (QDRYCLLVHPMASRRRQRRRQA) the chain is Cytoplasmic. Residues 154-174 (RVTCVLIWVVGGLLSIPTFLL) form a helical membrane-spanning segment. At 175-206 (RSIQAVPDLNITACILLLPHEAWHFARIVELN) the chain is on the extracellular side. The N-linked (GlcNAc...) asparagine glycan is linked to Asn-184. A helical transmembrane segment spans residues 207–227 (ILAFLLPLAAIVFFNYHILAS). At 228 to 250 (LRGREEVSRTRCGGRKDSKTTAL) the chain is on the cytoplasmic side. Residues 251–271 (ILTLVVAFLVCWAPYHFFAFL) traverse the membrane as a helical segment. Residues 272–294 (EFLFQVQAIRSCFWEDFIDLGLQ) lie on the Extracellular side of the membrane. Residues 295–315 (LANFLAFTNSSLNPVIYVFVG) traverse the membrane as a helical segment. Residues 316 to 352 (RLFRTKVWELYKQCTPKSLAPISSSHRKEIFQLFWRN) lie on the Cytoplasmic side of the membrane. Cys-329 carries the S-palmitoyl cysteine lipid modification.

This sequence belongs to the G-protein coupled receptor 1 family. Bradykinin receptor subfamily. BDKRB1 sub-subfamily.

It is found in the cell membrane. In terms of biological role, this is a receptor for bradykinin. Could be a factor in chronic pain and inflammation. This Chlorocebus pygerythrus (Vervet monkey) protein is B1 bradykinin receptor (BDKRB1).